A 574-amino-acid chain; its full sequence is Ribonuclease Y (574 aa).

Residues 1 to 21 (MSLLDLVLLLLVLGLGGVLLL) form a helical membrane-spanning segment. The region spanning 264-327 (AVTVVPIPSD…EIARMALEEL (64 aa)) is the KH domain. The 94-residue stretch at 390 to 483 (VLKHSIQVAH…VAAADALSAA (94 aa)) folds into the HD domain.

It belongs to the RNase Y family.

Its subcellular location is the cell membrane. Its function is as follows. Endoribonuclease that initiates mRNA decay. The protein is Ribonuclease Y of Thermus thermophilus (strain ATCC 27634 / DSM 579 / HB8).